The sequence spans 105 residues: Met repressor (105 aa).

It belongs to the MetJ family. Homodimer.

It is found in the cytoplasm. In terms of biological role, this regulatory protein, when combined with SAM (S-adenosylmethionine) represses the expression of the methionine regulon and of enzymes involved in SAM synthesis. This Salmonella dublin (strain CT_02021853) protein is Met repressor.